The sequence spans 215 residues: MSNLKQKDSKPEVAVTKSVKTYKKSIEYVNSDASDIEEDINRAEDEYASSSGFVNFLRDFKKRYGEYYSNNEIRRAAETRWNEMSFRHRCQYSAEPLDTFHVEPNSVSSLQRSSEGEHRMHSEISGCADTFFGAGGSNSCTPRKENKCSKPRVRKSCPKPRAKTSKQRRSCGKPKPKGARPRKACPRPRKKMECGKAKAKPRCLKPKSSKPKCSM.

Residues 140–215 (CTPRKENKCS…PKSSKPKCSM (76 aa)) form a disordered region. Basic residues-rich tracts occupy residues 149–190 (SKPR…RPRK) and 197–215 (AKAK…KCSM).

Not known. Encoded in the intron of cAMP-dependent protein kinase regulatory chain type I. The protein is Histone-like protein 18C (Mst77F) of Drosophila melanogaster (Fruit fly).